The following is a 598-amino-acid chain: Elongation factor 4 (598 aa).

One can recognise a tr-type G domain in the interval 2–184 (KNIRNFSIIA…RLVKEIPAPE (183 aa)). GTP is bound by residues 14–19 (DHGKST) and 131–134 (NKID).

It belongs to the TRAFAC class translation factor GTPase superfamily. Classic translation factor GTPase family. LepA subfamily.

It is found in the cell inner membrane. It catalyses the reaction GTP + H2O = GDP + phosphate + H(+). Its function is as follows. Required for accurate and efficient protein synthesis under certain stress conditions. May act as a fidelity factor of the translation reaction, by catalyzing a one-codon backward translocation of tRNAs on improperly translocated ribosomes. Back-translocation proceeds from a post-translocation (POST) complex to a pre-translocation (PRE) complex, thus giving elongation factor G a second chance to translocate the tRNAs correctly. Binds to ribosomes in a GTP-dependent manner. The polypeptide is Elongation factor 4 (Proteus mirabilis (strain HI4320)).